Consider the following 92-residue polypeptide: Large ribosomal subunit protein uL23c (92 aa).

This sequence belongs to the universal ribosomal protein uL23 family. In terms of assembly, part of the 50S ribosomal subunit.

It is found in the plastid. Its subcellular location is the chloroplast. Functionally, binds to 23S rRNA. This Chara vulgaris (Common stonewort) protein is Large ribosomal subunit protein uL23c (rpl23).